We begin with the raw amino-acid sequence, 214 residues long: MATKEELIQELSDSIISCKKDAVLAAVEKAKQVMEPAEIIENGLAAGMNQVGVLFERGKLFLPHVMMAADAMTAGVKVLEADMPAGAATKKLGVIVNGTVEGDVHDIGKSIVSTMLQSAGFEVHDIGRDVPIKNFVEKAKEVNANMIGISALMTTTLQGQREVIELLKEEGLRSRVKVMVGGAPATQAWADKIGADCYAENASEAVAKAKELLL.

Residues 1–91 (MATKEELIQE…DMPAGAATKK (91 aa)) enclose the B12-binding N-terminal domain. A B12-binding domain is found at 92-214 (LGVIVNGTVE…AVAKAKELLL (123 aa)). A methylcob(III)alamin-binding site is contributed by histidine 105.

Belongs to the methylamine corrinoid protein family.

It functions in the pathway one-carbon metabolism; methanogenesis from dimethylamine. In terms of biological role, acts as a methyl group carrier between MtbB and MtbA. This is Dimethylamine corrinoid protein 2 (mtbC2) from Methanosarcina mazei (strain ATCC BAA-159 / DSM 3647 / Goe1 / Go1 / JCM 11833 / OCM 88) (Methanosarcina frisia).